A 675-amino-acid chain; its full sequence is Protein PALS1 (675 aa).

Disordered stretches follow at residues 1–34 (MTTSHMNGHVTEESDSEVKNVDLASPEEHQKHRE) and 51–78 (RRSAQLERIRQQQEDMRRRREEEGKKQE). Positions 1 to 345 (MTTSHMNGHV…QQIKPPPAKE (345 aa)) are required for the correct localization of PALS1 and PATJ at cell-cell contacts and the normal formation of tight junctions and adherens junctions. Basic and acidic residues-rich tracts occupy residues 10-34 (VTEESDSEVKNVDLASPEEHQKHRE) and 54-78 (AQLERIRQQQEDMRRRREEEGKKQE). 2 positions are modified to phosphoserine: Ser-14 and Ser-25. An interaction with PARD6B region spans residues 21–140 (VDLASPEEHQ…LKHIQHTLID (120 aa)). 2 positions are modified to phosphoserine: Ser-83 and Ser-84. L27 domains are found at residues 120 to 177 (KILE…NKAS) and 179 to 235 (PFPL…MQLE). The interaction with LIN7C stretch occupies residues 181-243 (PLISNAQDLA…LEPITDERVY (63 aa)). Residues 256 to 336 (IVRIEKARDI…TLTFVLIPSQ (81 aa)) form the PDZ domain. An SH3 domain is found at 345 to 417 (ETVIHVKAHF…PGKSFQQQRE (73 aa)). Residues 479–660 (KRPIILIGPQ…AYQELLRLIN (182 aa)) form the Guanylate kinase-like domain. ATP is bound at residue 486–493 (GPQNCGQN).

This sequence belongs to the MAGUK family. In terms of assembly, heterodimer with MPP1. Forms a heterotrimeric complex composed of PALS1, LIN7B and PATJ; the N-terminal L27 domain of PALS1 interacts with the L27 domain of PATJ and the C-terminal L27 domain of PALS1 interacts with the L27 domain of LIN7B. Component of a complex composed of PALS1, CRB1 and MPP4. Component of a complex whose core is composed of ARHGAP17, AMOT, PALS1, PATJ and PARD3/PAR3. Component of a complex composed of PALS1, CRB1 and EPB41L5. Within the complex, interacts (via HOOK domain) with EPB41L5 (via FERM domain), and interacts with CRB1 (via intracellular domain). Component of a complex composed of PALS1, MPP3 and CRB1; PALS1 acts as a bridging protein between MPP3 (via guanylate kinase-like domain) and CRB1. Component of a complex composed of CRB3, PALS1 and PATJ. As part of the Crumbs complex; interacts with WWP1, the interaction is enhanced by AMOTL2 and facilitates WWP1 localization to the plasma membrane. The Crumbs complex promotes monoubiquitination of AMOTL2 by WWP1, which activates the Hippo signaling pathway. Interacts (via PDZ domain) with PATJ (via N-terminus). Interacts with EZR. Interacts (via PDZ domain) with CRB1 (via C-terminal ERLI motif). While the PDZ domain is sufficient for interaction with CRB1, the adjacent SH3 and guanylate kinase-like domains are likely to contribute to a high affinity interaction. Interacts with WWTR1/TAZ (via WW domain). Interacts with MPP7. Interacts (via PDZ domain) with CRB3 (via C-terminus). Interacts with LIN7C. Interacts with MPDZ. Interacts with PARD6B. Interacts with SC6A1. Interacts with CDH5; the interaction promotes PALS1 localization to cell junctions and is required for CDH5-mediated vascular lumen formation and endothelial cell. Interacts with NPHP1 (via coiled coil and SH3 domains). Interacts with NPHP4. Interacts with CRB2.

The protein resides in the golgi apparatus. The protein localises to the cell membrane. It is found in the endomembrane system. Its subcellular location is the cell junction. It localises to the tight junction. The protein resides in the adherens junction. The protein localises to the cell projection. It is found in the axon. Its subcellular location is the perikaryon. It localises to the apical cell membrane. In terms of biological role, plays a role in tight junction biogenesis and in the establishment of cell polarity in epithelial cells. Also involved in adherens junction biogenesis by ensuring correct localization of the exocyst complex protein EXOC4/SEC8 which allows trafficking of adherens junction structural component CDH1 to the cell surface. Plays a role through its interaction with CDH5 in vascular lumen formation and endothelial membrane polarity. Required during embryonic and postnatal retinal development. Required for the maintenance of cerebellar progenitor cells in an undifferentiated proliferative state, preventing premature differentiation, and is required for cerebellar histogenesis, fissure formation, cerebellar layer organization and cortical development. Plays a role in neuronal progenitor cell survival, potentially via promotion of mTOR signaling. Plays a role in the radial and longitudinal extension of the myelin sheath in Schwann cells. May modulate SC6A1/GAT1-mediated GABA uptake by stabilizing the transporter. May play a role in the T-cell receptor-mediated activation of NF-kappa-B. Required for localization of EZR to the apical membrane of parietal cells and may play a role in the dynamic remodeling of the apical cytoskeleton. Required for the normal polarized localization of the vesicular marker STX4. Required for the correct trafficking of the myelin proteins PMP22 and MAG. Involved in promoting phosphorylation and cytoplasmic retention of transcriptional coactivators YAP1 and WWTR1/TAZ which leads to suppression of TGFB1-dependent transcription of target genes such as CCN2/CTGF, SERPINE1/PAI1, SNAI1/SNAIL1 and SMAD7. This Pongo abelii (Sumatran orangutan) protein is Protein PALS1.